Here is a 572-residue protein sequence, read N- to C-terminus: Probable lysosomal cobalamin transporter (572 aa).

Transmembrane regions (helical) follow at residues 8 to 28 (VIWF…SVFI), 40 to 60 (FVTF…MLLP), 95 to 115 (IIYY…IPFA), 145 to 165 (TLTF…APMM), 188 to 208 (AFTF…AFYT), 314 to 334 (GGFC…MTVV), 374 to 394 (IIFA…VVAV), 421 to 441 (AVLT…LVPG), and 499 to 519 (VALN…LFLA). A disordered region spans residues 522–544 (GRRRGRGRESVSKHQKKRQSYMR).

This sequence belongs to the LIMR family. LMBRD1 subfamily.

Its subcellular location is the lysosome membrane. Probable lysosomal cobalamin transporter. Required to export cobalamin from lysosomes allowing its conversion to cofactors. The polypeptide is Probable lysosomal cobalamin transporter (Aspergillus fumigatus (strain ATCC MYA-4609 / CBS 101355 / FGSC A1100 / Af293) (Neosartorya fumigata)).